Here is a 1018-residue protein sequence, read N- to C-terminus: Integrator complex subunit 5 (1018 aa).

Positions 1 to 26 (MSALCDPPGAPGPPGPAPATHGPAPL) are disordered. Ser-2 carries the N-acetylserine modification. Residues 8–17 (PGAPGPPGPA) are compositionally biased toward pro residues. Ser-278 is subject to Phosphoserine. 3 helical membrane-spanning segments follow: residues 533-553 (LATQ…PLAF), 855-875 (LLFE…YCSV), and 929-949 (VFSQ…WGFL).

It belongs to the Integrator subunit 5 family. Component of the Integrator complex, composed of core subunits INTS1, INTS2, INTS3, INTS4, INTS5, INTS6, INTS7, INTS8, INTS9/RC74, INTS10, INTS11/CPSF3L, INTS12, INTS13, INTS14 and INTS15. The core complex associates with protein phosphatase 2A subunits PPP2CA and PPP2R1A, to form the Integrator-PP2A (INTAC) complex.

It is found in the nucleus. The protein resides in the cytoplasm. It localises to the nucleus membrane. In terms of biological role, component of the integrator complex, a multiprotein complex that terminates RNA polymerase II (Pol II) transcription in the promoter-proximal region of genes. The integrator complex provides a quality checkpoint during transcription elongation by driving premature transcription termination of transcripts that are unfavorably configured for transcriptional elongation: the complex terminates transcription by (1) catalyzing dephosphorylation of the C-terminal domain (CTD) of Pol II subunit POLR2A/RPB1 and SUPT5H/SPT5, (2) degrading the exiting nascent RNA transcript via endonuclease activity and (3) promoting the release of Pol II from bound DNA. The integrator complex is also involved in terminating the synthesis of non-coding Pol II transcripts, such as enhancer RNAs (eRNAs), small nuclear RNAs (snRNAs), telomerase RNAs and long non-coding RNAs (lncRNAs). Mediates recruitment of cytoplasmic dynein to the nuclear envelope, probably as component of the integrator complex. The polypeptide is Integrator complex subunit 5 (Ints5) (Mus musculus (Mouse)).